Consider the following 811-residue polypeptide: DEP domain-containing protein 1A (811 aa).

Positions 24–108 (FRAGMPLRKH…DNNQLFRFPA (85 aa)) constitute a DEP domain. A Rho-GAP domain is found at 281–321 (DYFLDLPEPLLTFEYYELFVNILVVCGYITVSDRSSGIHKI). Residue Ser512 is modified to Phosphoserine. The segment at 598–653 (AIDALQLCCLLLPPPNRRKLQLLMRMISRMSQNVDMPKLHDAMGTRSLMIHTFSRC) is interaction with ZNF224.

In terms of assembly, isoform 2 and isoform 5 can form homodimers and heterodimers. Interacts with ZNF224. In terms of tissue distribution, expressed in testis. Up-regulated in bladder cancer cells (at protein level).

The protein localises to the nucleus. Its function is as follows. May be involved in transcriptional regulation as a transcriptional corepressor. The DEPDC1A-ZNF224 complex may play a critical role in bladder carcinogenesis by repressing the transcription of the A20 gene, leading to transport of NF-KB protein into the nucleus, resulting in suppression of apoptosis of bladder cancer cells. The protein is DEP domain-containing protein 1A (DEPDC1) of Homo sapiens (Human).